We begin with the raw amino-acid sequence, 206 residues long: ATP-dependent dethiobiotin synthetase BioD (206 aa).

12 to 17 lines the ATP pocket; sequence GVGKTI. A Mg(2+)-binding site is contributed by T16. The active site involves K32. Positions 46 and 98 each coordinate Mg(2+). Residue 98–101 participates in ATP binding; that stretch reads EGAG.

It belongs to the dethiobiotin synthetase family. As to quaternary structure, homodimer. The cofactor is Mg(2+).

It is found in the cytoplasm. It carries out the reaction (7R,8S)-7,8-diammoniononanoate + CO2 + ATP = (4R,5S)-dethiobiotin + ADP + phosphate + 3 H(+). The protein operates within cofactor biosynthesis; biotin biosynthesis; biotin from 7,8-diaminononanoate: step 1/2. Functionally, catalyzes a mechanistically unusual reaction, the ATP-dependent insertion of CO2 between the N7 and N8 nitrogen atoms of 7,8-diaminopelargonic acid (DAPA, also called 7,8-diammoniononanoate) to form a ureido ring. The sequence is that of ATP-dependent dethiobiotin synthetase BioD from Novosphingobium aromaticivorans (strain ATCC 700278 / DSM 12444 / CCUG 56034 / CIP 105152 / NBRC 16084 / F199).